Here is a 717-residue protein sequence, read N- to C-terminus: Epithelial splicing regulatory protein 2 (717 aa).

Pro residues predominate over residues 1–14 (MTPPPPPPPPPGPD). The disordered stretch occupies residues 1-23 (MTPPPPPPPPPGPDPAVDSATDP). Serine 83 carries the phosphoserine modification. 3 RRM domains span residues 247-343 (TVVR…RFLS), 348-428 (VILR…RSTA), and 465-545 (DCVR…PCST). Serine 563 bears the Phosphoserine mark.

It belongs to the ESRP family. As to quaternary structure, interacts with RBPMS. As to expression, epithelial cell-specific.

It localises to the nucleus. MRNA splicing factor that regulates the formation of epithelial cell-specific isoforms. Specifically regulates the expression of FGFR2-IIIb, an epithelial cell-specific isoform of FGFR2. Also regulates the splicing of CD44, CTNND1, ENAH, 3 transcripts that undergo changes in splicing during the epithelial-to-mesenchymal transition (EMT). Acts by directly binding specific sequences in mRNAs. Binds the GU-rich sequence motifs in the ISE/ISS-3, a cis-element regulatory region present in the mRNA of FGFR2. The chain is Epithelial splicing regulatory protein 2 (Esrp2) from Mus musculus (Mouse).